The sequence spans 470 residues: Solute carrier family 7 member 13 (470 aa).

The Cytoplasmic segment spans residues Met-1 to Arg-11. A helical membrane pass occupies residues Val-12–Phe-32. Over Val-33–Asn-45 the chain is Extracellular. The chain crosses the membrane as a helical span at residues Val-46–Cys-66. The Cytoplasmic portion of the chain corresponds to Ser-67–Tyr-87. The helical transmembrane segment at Phe-88–Val-108 threads the bilayer. Topologically, residues Ala-109–Ser-128 are extracellular. A helical transmembrane segment spans residues Val-129–Thr-149. Topologically, residues Ser-150 to Ala-162 are cytoplasmic. The helical transmembrane segment at Ser-163–Ile-183 threads the bilayer. At Arg-184–His-206 the chain is on the extracellular side. Residues Leu-207–Ile-227 form a helical membrane-spanning segment. Residues Ala-228–Lys-240 are Cytoplasmic-facing. A helical transmembrane segment spans residues Cys-241 to Leu-261. Over Thr-262–Leu-287 the chain is Extracellular. A helical membrane pass occupies residues Ala-288–Phe-308. Over Lys-309–Pro-336 the chain is Cytoplasmic. A helical transmembrane segment spans residues Phe-337–Ile-357. A topological domain (extracellular) is located at residue Asp-358. The chain crosses the membrane as a helical span at residues Leu-359–Leu-379. Residues Arg-380–Lys-393 lie on the Cytoplasmic side of the membrane. A helical transmembrane segment spans residues Val-394–Leu-414. Topologically, residues Val-415–His-421 are extracellular. A helical membrane pass occupies residues Tyr-422–Phe-442. The Cytoplasmic portion of the chain corresponds to Lys-443 to Glu-470.

Belongs to the amino acid-polyamine-organocation (APC) superfamily. In terms of assembly, disulfide-linked heterodimer composed of the catalytic light subunit SLC7A13 and the heavy subunit SLC3A1. In terms of tissue distribution, expressed in the kidney.

It localises to the apical cell membrane. The catalysed reaction is L-cystine(out) + L-aspartate(in) = L-cystine(in) + L-aspartate(out). It catalyses the reaction L-cystine(out) = L-cystine(in). It carries out the reaction L-aspartate(in) + L-glutamate(out) = L-aspartate(out) + L-glutamate(in). The enzyme catalyses L-aspartate(in) + L-glutamine(out) = L-aspartate(out) + L-glutamine(in). The catalysed reaction is L-aspartate(in) + L-methionine(out) = L-aspartate(out) + L-methionine(in). It catalyses the reaction L-leucine(out) + L-aspartate(in) = L-leucine(in) + L-aspartate(out). It carries out the reaction L-valine(out) + L-aspartate(in) = L-valine(in) + L-aspartate(out). The enzyme catalyses L-aspartate(in) + L-phenylalanine(out) = L-aspartate(out) + L-phenylalanine(in). The catalysed reaction is L-tyrosine(out) + L-aspartate(in) = L-tyrosine(in) + L-aspartate(out). It catalyses the reaction L-tryptophan(out) + L-aspartate(in) = L-tryptophan(in) + L-aspartate(out). Functionally, associates with SLC3A1/rBAT to form a functional heterodimeric complex that transports anionic and neutral amino acids across the apical plasma membrane of renal epithelium. Preferentially mediates exchange transport, but can also operate via facilitated diffusion. May act as a major transporter for L-cystine in late proximal tubules, ensuring its reabsorption from the luminal fluid in exchange for cytosolic L-glutamate or L-aspartate. The polypeptide is Solute carrier family 7 member 13 (SLC7A13) (Homo sapiens (Human)).